Consider the following 177-residue polypeptide: Large ribosomal subunit protein uL6 (177 aa).

Belongs to the universal ribosomal protein uL6 family. Part of the 50S ribosomal subunit.

In terms of biological role, this protein binds to the 23S rRNA, and is important in its secondary structure. It is located near the subunit interface in the base of the L7/L12 stalk, and near the tRNA binding site of the peptidyltransferase center. This is Large ribosomal subunit protein uL6 from Salmonella newport (strain SL254).